The following is a 103-amino-acid chain: Small ribosomal subunit protein uS10 (103 aa).

It belongs to the universal ribosomal protein uS10 family. Part of the 30S ribosomal subunit.

Its function is as follows. Involved in the binding of tRNA to the ribosomes. The polypeptide is Small ribosomal subunit protein uS10 (Buchnera aphidicola subsp. Cinara cedri (strain Cc)).